Here is a 481-residue protein sequence, read N- to C-terminus: Glutamyl-tRNA(Gln) amidotransferase subunit A (481 aa).

Catalysis depends on charge relay system residues Lys-77 and Ser-151. The Acyl-ester intermediate role is filled by Ser-175.

Belongs to the amidase family. GatA subfamily. In terms of assembly, heterotrimer of A, B and C subunits.

The enzyme catalyses L-glutamyl-tRNA(Gln) + L-glutamine + ATP + H2O = L-glutaminyl-tRNA(Gln) + L-glutamate + ADP + phosphate + H(+). In terms of biological role, allows the formation of correctly charged Gln-tRNA(Gln) through the transamidation of misacylated Glu-tRNA(Gln) in organisms which lack glutaminyl-tRNA synthetase. The reaction takes place in the presence of glutamine and ATP through an activated gamma-phospho-Glu-tRNA(Gln). In Rubrobacter xylanophilus (strain DSM 9941 / JCM 11954 / NBRC 16129 / PRD-1), this protein is Glutamyl-tRNA(Gln) amidotransferase subunit A.